The sequence spans 79 residues: Protein OPG081 (79 aa).

Over 2 to 8 (VDAITVL) the chain is Intravirion. A helical transmembrane segment spans residues 9–29 (TAIGITVLMLLMVISGAALIV). The Virion surface segment spans residues 30–47 (KELNPNDIFTMQSLKFNR). Residues 48–68 (AVTIFKYIGLFIYIPGTIILY) traverse the membrane as a helical segment. At 69–79 (ATYVKSLLMKS) the chain is on the intravirion side.

It belongs to the orthopoxvirus OPG081 family.

The protein resides in the virion membrane. In terms of biological role, envelope protein. The sequence is that of Protein OPG081 (OPG081) from Vaccinia virus (strain Western Reserve) (VACV).